The sequence spans 275 residues: Methyltransferase str2 (275 aa).

Belongs to the methyltransferase superfamily. LaeA methyltransferase family.

It participates in mycotoxin biosynthesis. Its function is as follows. Methyltransferase; part of the gene cluster that mediates the biosynthesis of strobilurin A, an antifungal polyketide that contains a key beta-methoxyacrylate toxophore that targets the complex III of the mitochondrial electron transport chain. Strobilurin biosynthesis begins with construction of benzoyl CoA by step-wise elimination of ammonia from phenylalanine by the phenylalanine ammonia-lyase str11, oxygenation by str8 and retro-Claisen reaction to form benzoic acid, which is activated to its CoA thiolester benzoyl CoA by the dedicated CoA ligase str10. Benzoyl CoA forms the starter unit for the highly reducing polyketide synthase stpks1 that produces the polyketide prestrobilutin A. The FAD-dependent oxygenase str9 then catalyzes the key oxidative rearrangement responsible for the creation of the beta-methoxyacrylate toxophore. Str9 performs epoxidation of the 2,3 olefin of prestrobilutin A, followed by Meinwald rearrangement to furnish the aldehyde intermediate. Rapid enolization of the aldehyde intermediate would give the beta-methoxyacrylate skeleton and methylations catalyzed by str2 and str3 complete the synthesis and lead to the production of strobilurin A. The short-chain dehydrogenase stl2 and the dehydrogenase str4 play a role in the shunt pathway leading to the production of bolineol. The cluster encodes no obvious halogenase gene that could be involved in production of strobilurin B, nor any obvious dimethylallyl-transferase that could be involved in the production of strobilurin G. It is possible that unknown proteins encoded in, or near, the cluster (such as str1 or stl1) may form new classes of halogenases or dimethylally-transferases, or that the responsible genes are located elsewhere on the genome. Similarly, proteins encoded by str5/str6 hydrolases appear to have no chemical role in the biosynthesis of strobilurin A. Finally, no obvious self-resistance gene is found within the cluster. This Strobilurus tenacellus protein is Methyltransferase str2.